We begin with the raw amino-acid sequence, 63 residues long: Large ribosomal subunit protein uL29 (63 aa).

The protein belongs to the universal ribosomal protein uL29 family.

The polypeptide is Large ribosomal subunit protein uL29 (Enterobacter sp. (strain 638)).